We begin with the raw amino-acid sequence, 710 residues long: Choline transporter-like protein 4 (710 aa).

At 1–34 (MGGKQRDEDDEAYGKPVKYDPSFRGPIKNRSCTD) the chain is on the cytoplasmic side. The helical transmembrane segment at 35–55 (VICCVLFLLFILGYIVVGIVA) threads the bilayer. Residues 56-229 (WLYGDPRQVL…KIFEDFAQSW (174 aa)) lie on the Extracellular side of the membrane. Residues N69, N155, and N197 are each glycosylated (N-linked (GlcNAc...) asparagine). The helical transmembrane segment at 230–250 (YWILVALGVALVLSLLFILLL) threads the bilayer. At 251–252 (RL) the chain is on the cytoplasmic side. A helical transmembrane segment spans residues 253 to 273 (VAGPLVLVLILGVLGVLAYGI). Over 274-309 (YYCWEEYRVLRDKGASISQLGFTTNLSAYQSVQETW) the chain is Extracellular. N-linked (GlcNAc...) asparagine glycosylation is present at N298. A helical transmembrane segment spans residues 310–330 (LAALIVLAVLEAILLLMLIFL). The Cytoplasmic segment spans residues 331–358 (RQRIRIAIALLKEASKAVGQMMSTMFYP). Residues 359–379 (LVTFVLLLICIAYWAMTALYL) traverse the membrane as a helical segment. Residues 380–455 (ATSGQPQYVL…GVLGLFWTLN (76 aa)) are Extracellular-facing. Residues N393, N405, and N416 are each glycosylated (N-linked (GlcNAc...) asparagine). Residues 456-476 (WVLALGQCVLAGAFASFYWAF) form a helical membrane-spanning segment. Residues 477–501 (HKPQDIPTFPLISAFIRTLRYHTGS) lie on the Cytoplasmic side of the membrane. Residues 502–522 (LAFGALILTLVQIARVILEYI) traverse the membrane as a helical segment. At 523 to 560 (DHKLRGVQNPVARCIMCCFKCCLWCLEKFIKFLNRNAY) the chain is on the extracellular side. A helical membrane pass occupies residues 561–581 (IMIAIYGKNFCVSAKNAFMLL). Residues 582–597 (MRNIVRVVVLDKVTDL) are Cytoplasmic-facing. The helical transmembrane segment at 598 to 618 (LLFFGKLLVVGGVGVLSFFFF) threads the bilayer. Residues 619–638 (SGRIPGLGKDFKSPHLNYYW) are Extracellular-facing. A helical membrane pass occupies residues 639-659 (LPIMTSILGAYVIASGFFSVF). The Cytoplasmic portion of the chain corresponds to 660-710 (GMCVDTLFLCFLEDLERNNGSLDRPYYMSKSLLKILGKKNEAPPDNKKRKK).

The protein belongs to the CTL (choline transporter-like) family. Post-translationally, N-glycosylated; N-glycosylation of Asn-69, Asn-155 and Asn-393 is required for a proper thiamine pyrophosphate uptake. As to expression, highly expressed in colon, also detected in prostate, trachea and lung. Isoform 3 is also expressed in colon but a lower levels. In terms of tissue distribution, expressed in colon at low levels.

Its subcellular location is the membrane. The protein resides in the apical cell membrane. The enzyme catalyses choline(out) + n H(+)(in) = choline(in) + n H(+)(out). It catalyses the reaction thiamine diphosphate(out) = thiamine diphosphate(in). Its function is as follows. Choline transporter that plays a role in the choline-acetylcholine system and is required to the efferent innervation of hair cells in the olivocochlear bundle for the maintenance of physiological function of outer hair cells and the protection of hair cells from acoustic injury. Also described as a thiamine pyrophosphate transporter in colon, may mediate the absorption of microbiota-generated thiamine pyrophosphate and contribute to host thiamine (vitamin B1) homeostasis. Functionally, also has thiamine pyrophosphate transporter activity. This Homo sapiens (Human) protein is Choline transporter-like protein 4.